A 488-amino-acid chain; its full sequence is UDP-glycosyltransferase 85A3 (488 aa).

Residues S306, 363–365 (CPQ), 380–388 (HCGWNSTLE), and 402–405 (FAEQ) each bind UDP-alpha-D-glucose.

This sequence belongs to the UDP-glycosyltransferase family. In terms of tissue distribution, expressed in roots and flowers.

The protein is UDP-glycosyltransferase 85A3 (UGT85A3) of Arabidopsis thaliana (Mouse-ear cress).